A 210-amino-acid chain; its full sequence is Protein SgcE (210 aa).

Ser-6 provides a ligand contact to substrate. The a divalent metal cation site is built by His-31, Asp-33, and His-64. The active-site Proton acceptor is the Asp-33. Substrate is bound by residues His-64, 140 to 143 (DGQG), 169 to 171 (DGG), and 191 to 192 (GR). Position 169 (Asp-169) interacts with a divalent metal cation. Asp-169 functions as the Proton donor in the catalytic mechanism.

It belongs to the ribulose-phosphate 3-epimerase family. Co(2+) serves as cofactor. Fe(2+) is required as a cofactor. It depends on Mn(2+) as a cofactor. The cofactor is Zn(2+).

It participates in carbohydrate degradation. Functionally, probable pentose-5-phosphate 3-epimerase. The chain is Protein SgcE (sgcE) from Escherichia coli (strain K12).